A 551-amino-acid chain; its full sequence is Meiotically up-regulated gene 184 protein (551 aa).

Residues D12–F78 form the J domain. A compositionally biased stretch (polar residues) spans R85–T122. Disordered stretches follow at residues R85–D153, R176–K226, and E334–N359. The span at K124 to S133 shows a compositional bias: basic and acidic residues. Positions K134–K146 are enriched in basic residues. Composition is skewed to basic and acidic residues over residues R176 to N187 and G203 to E219.

The protein localises to the cytoplasm. The protein resides in the cytoskeleton. Has a role in sporulation. This chain is Meiotically up-regulated gene 184 protein (mug184), found in Schizosaccharomyces pombe (strain 972 / ATCC 24843) (Fission yeast).